A 283-amino-acid chain; its full sequence is Aldo-keto reductase MSMEG_2407/MSMEI_2346 (283 aa).

Tyr-58 acts as the Proton donor in catalysis. NADPH is bound by residues Gly-196, Leu-198, Val-200, Ile-236, Arg-238, Ser-239, Ala-240, Arg-244, Ser-247, Asn-248, and Arg-274.

The protein belongs to the aldo/keto reductase family. Monomer.

With respect to regulation, inhibited by the antituberculosis drug isoniazid (INH). In terms of biological role, catalyzes the NADPH-dependent reduction of dicarbonyls. Exhibits narrow substrate specificity, with preferential activity against the dicarbonyl substrates phenylglyoxal and methylglyoxal. Exhibits weak activity with ethyl-2-methyl acetoacetate. Cannot use NADH. May play an important role in the detoxification of methylglyoxal. This Mycolicibacterium smegmatis (strain ATCC 700084 / mc(2)155) (Mycobacterium smegmatis) protein is Aldo-keto reductase MSMEG_2407/MSMEI_2346.